The chain runs to 665 residues: GTPase IMAP family member 8 (665 aa).

One can recognise an AIG1-type G 1 domain in the interval Met-8–Arg-210. Residues Gly-17–Ser-24 are G1. GTP contacts are provided by residues Gly-17–Ala-25 and Ser-38. Residues Thr-44–Met-48 form a G2 region. Positions Asp-65–Asp-68 are G3. Residues Thr-134 to Asp-137 form a G4 region. Residues Arg-135–Asp-137 and Asn-170 contribute to the GTP site. A G5 region spans residues Asn-169–Lys-171. A disordered region spans residues Glu-217–Ser-246. Residues Glu-222 to Gln-233 are compositionally biased toward basic and acidic residues. Residues Leu-234–Ser-246 are compositionally biased toward polar residues. 2 AIG1-type G domains span residues Thr-245–Glu-435 and Lys-436–Ile-644. Coiled-coil stretches lie at residues Asn-400–Gly-427 and Gln-608–Leu-657.

The protein belongs to the TRAFAC class TrmE-Era-EngA-EngB-Septin-like GTPase superfamily. AIG1/Toc34/Toc159-like paraseptin GTPase family. IAN subfamily. Expressed in the spleen, intestine, liver, and colon, as well as in lung, placenta, kidney, muscle, and heart. Extremely low expression, if any, in brain, in thymus, bone marrow, and blood leukocytes. Detected in T-cells.

It is found in the endoplasmic reticulum. The protein resides in the golgi apparatus. The protein localises to the mitochondrion. Its subcellular location is the cytoplasm. It localises to the cytosol. In terms of biological role, exerts an anti-apoptotic effect in the immune system and is involved in responses to infections. The chain is GTPase IMAP family member 8 (GIMAP8) from Homo sapiens (Human).